A 396-amino-acid chain; its full sequence is Phosphoglycerate kinase (396 aa).

Substrate contacts are provided by residues 21–23 (DFN), arginine 36, 59–62 (HLGK), arginine 119, and arginine 156. ATP-binding positions include lysine 206, glutamate 325, and 352–355 (GGDS).

Belongs to the phosphoglycerate kinase family. In terms of assembly, monomer.

Its subcellular location is the cytoplasm. It carries out the reaction (2R)-3-phosphoglycerate + ATP = (2R)-3-phospho-glyceroyl phosphate + ADP. It participates in carbohydrate degradation; glycolysis; pyruvate from D-glyceraldehyde 3-phosphate: step 2/5. The polypeptide is Phosphoglycerate kinase (Staphylococcus saprophyticus subsp. saprophyticus (strain ATCC 15305 / DSM 20229 / NCIMB 8711 / NCTC 7292 / S-41)).